The primary structure comprises 899 residues: Tubulin glycylase 3F (899 aa).

In terms of domain architecture, TTL spans 471-835 (FKDVIQIIKN…TEYYQIQNWK (365 aa)). ATP contacts are provided by residues 642–645 (QKYI), lysine 663, and aspartate 665.

The protein resides in the cytoplasm. It localises to the cytoskeleton. It is found in the cilium basal body. In terms of biological role, probable glycylase which modifies tubulin, generating side chains of glycine on the gamma-carboxyl groups of specific glutamate residues within the C-terminal tail of tubulin. In Tetrahymena thermophila (strain SB210), this protein is Tubulin glycylase 3F (TTLL3F).